The following is a 366-amino-acid chain: tRNA/tmRNA (uracil-C(5))-methyltransferase (366 aa).

S-adenosyl-L-methionine is bound by residues Gln189, Tyr217, Asn222, Glu238, and Asp298. Catalysis depends on Cys323, which acts as the Nucleophile. Residue Glu357 is the Proton acceptor of the active site.

The protein belongs to the class I-like SAM-binding methyltransferase superfamily. RNA M5U methyltransferase family. TrmA subfamily.

The enzyme catalyses uridine(54) in tRNA + S-adenosyl-L-methionine = 5-methyluridine(54) in tRNA + S-adenosyl-L-homocysteine + H(+). It catalyses the reaction uridine(341) in tmRNA + S-adenosyl-L-methionine = 5-methyluridine(341) in tmRNA + S-adenosyl-L-homocysteine + H(+). In terms of biological role, dual-specificity methyltransferase that catalyzes the formation of 5-methyluridine at position 54 (m5U54) in all tRNAs, and that of position 341 (m5U341) in tmRNA (transfer-mRNA). In Idiomarina loihiensis (strain ATCC BAA-735 / DSM 15497 / L2-TR), this protein is tRNA/tmRNA (uracil-C(5))-methyltransferase.